The following is a 522-amino-acid chain: Probable protein kinase UbiB (522 aa).

Residues 119 to 496 (SFDADPVASA…QRRTNRLLLT (378 aa)) enclose the Protein kinase domain. Residues 125–133 (VASASIAQV) and lysine 147 contribute to the ATP site. Catalysis depends on aspartate 282, which acts as the Proton acceptor. The chain crosses the membrane as a helical span at residues 494–514 (LLTVFYLIGGFVAGGLFAHWI).

Belongs to the ABC1 family. UbiB subfamily.

It localises to the cell inner membrane. Its pathway is cofactor biosynthesis; ubiquinone biosynthesis [regulation]. In terms of biological role, is probably a protein kinase regulator of UbiI activity which is involved in aerobic coenzyme Q (ubiquinone) biosynthesis. This chain is Probable protein kinase UbiB, found in Leptothrix cholodnii (strain ATCC 51168 / LMG 8142 / SP-6) (Leptothrix discophora (strain SP-6)).